Here is a 187-residue protein sequence, read N- to C-terminus: Probable chorismate pyruvate-lyase (187 aa).

Residues Arg-77, Leu-115, and Glu-174 each contribute to the substrate site.

Belongs to the UbiC family.

It is found in the cytoplasm. The enzyme catalyses chorismate = 4-hydroxybenzoate + pyruvate. It participates in cofactor biosynthesis; ubiquinone biosynthesis. Its function is as follows. Removes the pyruvyl group from chorismate, with concomitant aromatization of the ring, to provide 4-hydroxybenzoate (4HB) for the ubiquinone pathway. In Shewanella sp. (strain ANA-3), this protein is Probable chorismate pyruvate-lyase.